The primary structure comprises 91 residues: Small ribosomal subunit protein uS19 (91 aa).

This sequence belongs to the universal ribosomal protein uS19 family.

In terms of biological role, protein S19 forms a complex with S13 that binds strongly to the 16S ribosomal RNA. The polypeptide is Small ribosomal subunit protein uS19 (Synechococcus sp. (strain CC9902)).